A 235-amino-acid chain; its full sequence is Uridylate kinase (235 aa).

9–12 (KLSG) lines the ATP pocket. Glycine 51 contacts UMP. ATP contacts are provided by glycine 52 and arginine 56. Residues aspartate 71 and 133-140 (SGNPFFTT) contribute to the UMP site. Threonine 160, tyrosine 166, and aspartate 169 together coordinate ATP.

Belongs to the UMP kinase family. Homohexamer.

The protein resides in the cytoplasm. The catalysed reaction is UMP + ATP = UDP + ADP. The protein operates within pyrimidine metabolism; CTP biosynthesis via de novo pathway; UDP from UMP (UMPK route): step 1/1. Its activity is regulated as follows. Inhibited by UTP. Catalyzes the reversible phosphorylation of UMP to UDP. The polypeptide is Uridylate kinase (Gloeobacter violaceus (strain ATCC 29082 / PCC 7421)).